The chain runs to 138 residues: Transcription antitermination protein NusB (138 aa).

Belongs to the NusB family.

Involved in transcription antitermination. Required for transcription of ribosomal RNA (rRNA) genes. Binds specifically to the boxA antiterminator sequence of the ribosomal RNA (rrn) operons. The polypeptide is Transcription antitermination protein NusB (Yersinia enterocolitica serotype O:8 / biotype 1B (strain NCTC 13174 / 8081)).